Consider the following 83-residue polypeptide: Mu-theraphotoxin-Hhn2p (83 aa).

A signal peptide spans 1 to 21 (MKASMYLALAGLVLLFVVGYA). A propeptide spanning residues 22-48 (SESEEKEFPRELLSKIFAVDDFKGEER) is cleaved from the precursor. Disulfide bonds link Cys50–Cys65, Cys57–Cys70, and Cys64–Cys77. Leu81 carries the post-translational modification Leucine amide.

It belongs to the neurotoxin 10 (Hwtx-1) family. 15 (Hntx-3) subfamily. As to quaternary structure, monomer. In terms of tissue distribution, expressed by the venom gland.

The protein localises to the secreted. Lethal neurotoxin. Selectively blocks tetrodotoxin-sensitive voltage-gated sodium channels (Nav). Does not affect tetrodotoxin-resistant voltage-gated sodium channels or calcium channels. This Cyriopagopus hainanus (Chinese bird spider) protein is Mu-theraphotoxin-Hhn2p.